The following is a 346-amino-acid chain: Dihydroorotase (346 aa).

The Zn(2+) site is built by histidine 14 and histidine 16. Substrate contacts are provided by residues 16–18 (HLR) and asparagine 42. Lysine 100, histidine 137, and histidine 175 together coordinate Zn(2+). At lysine 100 the chain carries N6-carboxylysine. A substrate-binding site is contributed by histidine 137. Leucine 220 serves as a coordination point for substrate. A Zn(2+)-binding site is contributed by aspartate 248. The active site involves aspartate 248. The substrate site is built by histidine 252 and alanine 264.

This sequence belongs to the metallo-dependent hydrolases superfamily. DHOase family. Class II DHOase subfamily. As to quaternary structure, homodimer. Requires Zn(2+) as cofactor.

It carries out the reaction (S)-dihydroorotate + H2O = N-carbamoyl-L-aspartate + H(+). It participates in pyrimidine metabolism; UMP biosynthesis via de novo pathway; (S)-dihydroorotate from bicarbonate: step 3/3. In terms of biological role, catalyzes the reversible cyclization of carbamoyl aspartate to dihydroorotate. The polypeptide is Dihydroorotase (Ruegeria sp. (strain TM1040) (Silicibacter sp.)).